Here is a 702-residue protein sequence, read N- to C-terminus: Putative methyltransferase NSUN7 (702 aa).

Residue cysteine 424 is the Nucleophile of the active site. 3 disordered regions span residues 522-541 (KSSK…TKAA), 567-593 (ETVT…KHKL), and 675-702 (PTPS…RRWL). A compositionally biased stretch (basic residues) spans 523–534 (SSKREKKKKKSK). A compositionally biased stretch (polar residues) spans 567 to 587 (ETVTKPSLPQKNTAQVGASSQ). The segment covering 681 to 691 (RKGEKPKDDTR) has biased composition (basic and acidic residues).

The protein belongs to the class I-like SAM-binding methyltransferase superfamily. RsmB/NOP family.

May have S-adenosyl-L-methionine-dependent methyl-transferase activity. The sequence is that of Putative methyltransferase NSUN7 (NSUN7) from Macaca fascicularis (Crab-eating macaque).